Reading from the N-terminus, the 158-residue chain is Ribosome maturation factor RimP (158 aa).

The protein belongs to the RimP family.

The protein localises to the cytoplasm. Functionally, required for maturation of 30S ribosomal subunits. This is Ribosome maturation factor RimP from Pseudomonas fluorescens (strain Pf0-1).